Consider the following 208-residue polypeptide: Large ribosomal subunit protein uL3 (208 aa).

Positions 116-148 are disordered; sequence GFQGVIKRHGQSRGPMAHGSRYHRRPGSMGPVA.

It belongs to the universal ribosomal protein uL3 family. Part of the 50S ribosomal subunit. Forms a cluster with proteins L14 and L19.

One of the primary rRNA binding proteins, it binds directly near the 3'-end of the 23S rRNA, where it nucleates assembly of the 50S subunit. This Streptococcus pyogenes serotype M5 (strain Manfredo) protein is Large ribosomal subunit protein uL3.